We begin with the raw amino-acid sequence, 180 residues long: Acireductone dioxygenase (180 aa).

Positions 99, 101, 105, and 145 each coordinate Fe(2+). Residues H99, H101, E105, and H145 each contribute to the Ni(2+) site.

It belongs to the acireductone dioxygenase (ARD) family. In terms of assembly, monomer. The cofactor is Fe(2+). Requires Ni(2+) as cofactor.

The catalysed reaction is 1,2-dihydroxy-5-(methylsulfanyl)pent-1-en-3-one + O2 = 3-(methylsulfanyl)propanoate + CO + formate + 2 H(+). It catalyses the reaction 1,2-dihydroxy-5-(methylsulfanyl)pent-1-en-3-one + O2 = 4-methylsulfanyl-2-oxobutanoate + formate + 2 H(+). Its pathway is amino-acid biosynthesis; L-methionine biosynthesis via salvage pathway; L-methionine from S-methyl-5-thio-alpha-D-ribose 1-phosphate: step 5/6. In terms of biological role, catalyzes 2 different reactions between oxygen and the acireductone 1,2-dihydroxy-3-keto-5-methylthiopentene (DHK-MTPene) depending upon the metal bound in the active site. Fe-containing acireductone dioxygenase (Fe-ARD) produces formate and 2-keto-4-methylthiobutyrate (KMTB), the alpha-ketoacid precursor of methionine in the methionine recycle pathway. Ni-containing acireductone dioxygenase (Ni-ARD) produces methylthiopropionate, carbon monoxide and formate, and does not lie on the methionine recycle pathway. The chain is Acireductone dioxygenase from Geobacillus thermodenitrificans (strain NG80-2).